We begin with the raw amino-acid sequence, 100 residues long: Urease subunit gamma (100 aa).

Belongs to the urease gamma subunit family. As to quaternary structure, heterotrimer of UreA (gamma), UreB (beta) and UreC (alpha) subunits. Three heterotrimers associate to form the active enzyme.

The protein resides in the cytoplasm. The enzyme catalyses urea + 2 H2O + H(+) = hydrogencarbonate + 2 NH4(+). The protein operates within nitrogen metabolism; urea degradation; CO(2) and NH(3) from urea (urease route): step 1/1. This chain is Urease subunit gamma, found in Prochlorococcus marinus (strain NATL2A).